The primary structure comprises 773 residues: Subtilisin-like protease SBT3.4 (773 aa).

An N-terminal signal peptide occupies residues 1–23 (MRNFRSSVLVVLSLIIVLNVARA). A propeptide spans 24–108 (SAKSKVHIVY…VIPDSYYELA (85 aa)) (activation peptide). The Inhibitor I9 domain occupies 29–108 (VHIVYLGEKQ…VIPDSYYELA (80 aa)). The region spanning 112–620 (IWDYLGPSAD…GGLVNPEKAA (509 aa)) is the Peptidase S8 domain. Residue Asp142 is the Charge relay system of the active site. Residue Asn200 is glycosylated (N-linked (GlcNAc...) asparagine). The active-site Charge relay system is the His216. Residues Asn231, Asn408, and Asn536 are each glycosylated (N-linked (GlcNAc...) asparagine). The PA domain occupies 382 to 474 (SLVYPEDPGN…IDNELGTDIL (93 aa)). Ser551 acts as the Charge relay system in catalysis. An N-linked (GlcNAc...) asparagine glycan is attached at Asn643.

This sequence belongs to the peptidase S8 family.

It localises to the secreted. This chain is Subtilisin-like protease SBT3.4, found in Arabidopsis thaliana (Mouse-ear cress).